A 557-amino-acid polypeptide reads, in one-letter code: Formate--tetrahydrofolate ligase 2 (557 aa).

An ATP-binding site is contributed by 66–73 (TPAGEGKT).

It belongs to the formate--tetrahydrofolate ligase family.

The enzyme catalyses (6S)-5,6,7,8-tetrahydrofolate + formate + ATP = (6R)-10-formyltetrahydrofolate + ADP + phosphate. The protein operates within one-carbon metabolism; tetrahydrofolate interconversion. This Streptococcus pyogenes serotype M5 (strain Manfredo) protein is Formate--tetrahydrofolate ligase 2.